Here is a 272-residue protein sequence, read N- to C-terminus: Formamidopyrimidine-DNA glycosylase (272 aa).

Proline 2 acts as the Schiff-base intermediate with DNA in catalysis. Glutamate 3 serves as the catalytic Proton donor. The active-site Proton donor; for beta-elimination activity is the lysine 58. Histidine 92, arginine 111, and arginine 153 together coordinate DNA. The FPG-type zinc-finger motif lies at 238 to 272; that stretch reads NVYGRGGEPCPVCAKPLTEKPLSQRTTVYCTHCQN. Residue arginine 262 is the Proton donor; for delta-elimination activity of the active site.

This sequence belongs to the FPG family. As to quaternary structure, monomer. Requires Zn(2+) as cofactor.

It catalyses the reaction Hydrolysis of DNA containing ring-opened 7-methylguanine residues, releasing 2,6-diamino-4-hydroxy-5-(N-methyl)formamidopyrimidine.. It carries out the reaction 2'-deoxyribonucleotide-(2'-deoxyribose 5'-phosphate)-2'-deoxyribonucleotide-DNA = a 3'-end 2'-deoxyribonucleotide-(2,3-dehydro-2,3-deoxyribose 5'-phosphate)-DNA + a 5'-end 5'-phospho-2'-deoxyribonucleoside-DNA + H(+). Functionally, involved in base excision repair of DNA damaged by oxidation or by mutagenic agents. Acts as a DNA glycosylase that recognizes and removes damaged bases. Has a preference for oxidized purines, such as 7,8-dihydro-8-oxoguanine (8-oxoG). Has AP (apurinic/apyrimidinic) lyase activity and introduces nicks in the DNA strand. Cleaves the DNA backbone by beta-delta elimination to generate a single-strand break at the site of the removed base with both 3'- and 5'-phosphates. This Teredinibacter turnerae (strain ATCC 39867 / T7901) protein is Formamidopyrimidine-DNA glycosylase.